The sequence spans 342 residues: uncharacterized protein (342 aa).

Belongs to the cycloisomerase 2 family.

This is an uncharacterized protein from Staphylococcus aureus (strain MSSA476).